Consider the following 341-residue polypeptide: Phosphate acyltransferase (341 aa).

It belongs to the PlsX family. In terms of assembly, homodimer. Probably interacts with PlsY.

It is found in the cytoplasm. It carries out the reaction a fatty acyl-[ACP] + phosphate = an acyl phosphate + holo-[ACP]. The protein operates within lipid metabolism; phospholipid metabolism. Its function is as follows. Catalyzes the reversible formation of acyl-phosphate (acyl-PO(4)) from acyl-[acyl-carrier-protein] (acyl-ACP). This enzyme utilizes acyl-ACP as fatty acyl donor, but not acyl-CoA. This Vibrio vulnificus (strain CMCP6) protein is Phosphate acyltransferase.